Here is a 161-residue protein sequence, read N- to C-terminus: Cytidylate kinase (161 aa).

Residue 7-15 (GLAGTGTTT) participates in ATP binding.

It belongs to the cytidylate kinase family. Type 2 subfamily.

The protein resides in the cytoplasm. The enzyme catalyses CMP + ATP = CDP + ADP. The catalysed reaction is dCMP + ATP = dCDP + ADP. The protein is Cytidylate kinase (cmk) of Methanothermobacter thermautotrophicus (strain ATCC 29096 / DSM 1053 / JCM 10044 / NBRC 100330 / Delta H) (Methanobacterium thermoautotrophicum).